The chain runs to 372 residues: Protein RecA (372 aa).

66 to 73 (GPESSGKT) is a binding site for ATP. The interval 328–359 (GVGVRPEEPTATESGPDAATAESAPAVPAPAT) is disordered. Over residues 345 to 359 (AATAESAPAVPAPAT) the composition is skewed to low complexity.

It belongs to the RecA family.

It localises to the cytoplasm. In terms of biological role, can catalyze the hydrolysis of ATP in the presence of single-stranded DNA, the ATP-dependent uptake of single-stranded DNA by duplex DNA, and the ATP-dependent hybridization of homologous single-stranded DNAs. It interacts with LexA causing its activation and leading to its autocatalytic cleavage. This Streptomyces ambofaciens protein is Protein RecA.